The chain runs to 183 residues: uncharacterized protein (183 aa).

4 consecutive transmembrane segments (helical) span residues 13-35 (KALL…LTYS), 60-82 (LLIL…KLRF), 117-139 (FEPV…YAIF), and 149-171 (LLFY…LYLS).

It is found in the cell membrane. This is an uncharacterized protein from Archaeoglobus fulgidus (strain ATCC 49558 / DSM 4304 / JCM 9628 / NBRC 100126 / VC-16).